The chain runs to 397 residues: Lysophospholipid transporter LplT (397 aa).

The Periplasmic segment spans residues 1-17; the sequence is MSESVHTNTSLWSKGMK. The helical transmembrane segment at 18-38 threads the bilayer; it reads AVIVAQFLSAFGDNALLFATL. The Cytoplasmic segment spans residues 39–52; the sequence is ALLKAQFYPEWSQP. A helical transmembrane segment spans residues 53–73; sequence ILQMVFVGAYILFAPFVGQVA. Topologically, residues 74–90 are periplasmic; that stretch reads DSFAKGRVMMFANGLKL. A helical membrane pass occupies residues 91–111; the sequence is LGAASICFGINPFLGYTLVGV. The Cytoplasmic segment spans residues 112 to 144; that stretch reads GAAAYSPAKYGILGELTTGSKLVKANGLMEAST. The helical transmembrane segment at 145 to 165 threads the bilayer; the sequence is IAAILLGSVAGGVLADWHVLV. Residue Ala-166 is a topological domain, periplasmic. The helical transmembrane segment at 167-187 threads the bilayer; it reads LAACALAYGGAVVANIYIPKL. The Cytoplasmic segment spans residues 188-226; that stretch reads AAARPGQSWNLINMTRSFLNACTSLWRNGETRFSLVGTS. The helical transmembrane segment at 227–247 threads the bilayer; that stretch reads LFWGAGVTLRFLLVLWVPVAL. The Periplasmic portion of the chain corresponds to 248–256; sequence GITDNATPT. The helical transmembrane segment at 257–277 threads the bilayer; sequence YLNAMVAIGIVVGAGAAAKLV. The Cytoplasmic portion of the chain corresponds to 278 to 280; sequence TLE. The helical transmembrane segment at 281–301 threads the bilayer; sequence TVSRCMPAGILIGVVVLIFSL. The Periplasmic segment spans residues 302 to 304; it reads QHE. A helical transmembrane segment spans residues 305-325; it reads LLPAYALLMLIGVLGGFFVVP. The Cytoplasmic portion of the chain corresponds to 326–343; sequence LNALLQERGKKSVGAGNA. Residues 344–364 traverse the membrane as a helical segment; the sequence is IAVQNLGENSAMLLMLGIYSL. Residues 365–366 lie on the Periplasmic side of the membrane; the sequence is AV. The chain crosses the membrane as a helical span at residues 367-387; that stretch reads MVGIPVVPIGIGFGALFALAI. Residues 388–397 are Cytoplasmic-facing; that stretch reads TALWIWQRRH.

It belongs to the major facilitator superfamily. LplT (TC 2.A.1.42) family.

It is found in the cell inner membrane. Functionally, catalyzes the facilitated diffusion of 2-acyl-glycero-3-phosphoethanolamine (2-acyl-GPE) into the cell. The protein is Lysophospholipid transporter LplT of Escherichia coli (strain SMS-3-5 / SECEC).